We begin with the raw amino-acid sequence, 116 residues long: Aspartate 1-decarboxylase (116 aa).

The active-site Schiff-base intermediate with substrate; via pyruvic acid is S25. S25 bears the Pyruvic acid (Ser) mark. T57 is a substrate binding site. Y58 acts as the Proton donor in catalysis. A substrate-binding site is contributed by 72-74; that stretch reads GAA.

This sequence belongs to the PanD family. In terms of assembly, heterooctamer of four alpha and four beta subunits. It depends on pyruvate as a cofactor. In terms of processing, is synthesized initially as an inactive proenzyme, which is activated by self-cleavage at a specific serine bond to produce a beta-subunit with a hydroxyl group at its C-terminus and an alpha-subunit with a pyruvoyl group at its N-terminus.

It localises to the cytoplasm. It carries out the reaction L-aspartate + H(+) = beta-alanine + CO2. Its pathway is cofactor biosynthesis; (R)-pantothenate biosynthesis; beta-alanine from L-aspartate: step 1/1. In terms of biological role, catalyzes the pyruvoyl-dependent decarboxylation of aspartate to produce beta-alanine. This Helicobacter acinonychis (strain Sheeba) protein is Aspartate 1-decarboxylase.